Here is a 360-residue protein sequence, read N- to C-terminus: Protein phosphatase 1L (360 aa).

The Extracellular portion of the chain corresponds to 1–25; the sequence is MIEDTMTLLSLLGRIMRYFLLRPET. A helical membrane pass occupies residues 26–42; the sequence is LFLLCISLALWSYFFHT. Residues 43–360 are Cytoplasmic-facing; that stretch reads DEVKTIVKSS…FRNSSKTEEQ (318 aa). A PPM-type phosphatase domain is found at 92–351; sequence NVAVYSIQGR…DNITVMVVKF (260 aa). The Mn(2+) site is built by Asp-128, Gly-129, Asp-302, and Asp-342.

The protein belongs to the PP2C family. In terms of assembly, interacts with MAP3K7/TAK1. Interacts with MAP3K5. The cofactor is Mg(2+). Requires Mn(2+) as cofactor. In terms of tissue distribution, ubiquitous. Highly expressed in heart, placenta, lung, liver, kidney and pancreas.

It localises to the membrane. It carries out the reaction O-phospho-L-seryl-[protein] + H2O = L-seryl-[protein] + phosphate. The catalysed reaction is O-phospho-L-threonyl-[protein] + H2O = L-threonyl-[protein] + phosphate. In terms of biological role, acts as a suppressor of the SAPK signaling pathways by associating with and dephosphorylating MAP3K7/TAK1 and MAP3K5, and by attenuating the association between MAP3K7/TAK1 and MAP2K4 or MAP2K6. In Homo sapiens (Human), this protein is Protein phosphatase 1L (PPM1L).